Here is a 1332-residue protein sequence, read N- to C-terminus: DNA-directed RNA polymerase subunit beta'' (1332 aa).

4 residues coordinate Zn(2+): C220, C291, C298, and C301.

It belongs to the RNA polymerase beta' chain family. RpoC2 subfamily. As to quaternary structure, in plastids the minimal PEP RNA polymerase catalytic core is composed of four subunits: alpha, beta, beta', and beta''. When a (nuclear-encoded) sigma factor is associated with the core the holoenzyme is formed, which can initiate transcription. It depends on Zn(2+) as a cofactor.

Its subcellular location is the plastid. The protein resides in the chloroplast. It carries out the reaction RNA(n) + a ribonucleoside 5'-triphosphate = RNA(n+1) + diphosphate. In terms of biological role, DNA-dependent RNA polymerase catalyzes the transcription of DNA into RNA using the four ribonucleoside triphosphates as substrates. The chain is DNA-directed RNA polymerase subunit beta'' from Lotus japonicus (Lotus corniculatus var. japonicus).